A 311-amino-acid chain; its full sequence is Protein nfe2 (311 aa).

Its function is as follows. Responsible for the nodulation efficiency and competitive ability of strain GR4 on alfalfa roots. The polypeptide is Protein nfe2 (nfe2) (Rhizobium meliloti (Ensifer meliloti)).